The chain runs to 199 residues: MSDFQKSFSESTSSIKFDEKYIDNSVQPNDIGVADQWAVKTVDDPCVGNLATPVNSGYFTKAFINNLPFYREGISPNFRGLETGAAFGYLLYGPFTMTGPLRNSEFAVTAGLLSAIGAVHIMTALLVLYNAPGKAPNVQPPDATVNNPPKDLFTRAGWADFTSGFWLGGCGGAVFAWLLVGTLHLDTLMPIIKNIWTAG.

2 helical membrane passes run 108–128 (VTAGLLSAIGAVHIMTALLVL) and 165–185 (FWLGGCGGAVFAWLLVGTLHL).

Belongs to the PsaL family.

The protein resides in the cellular thylakoid membrane. This chain is Photosystem I reaction center subunit XI, found in Prochlorococcus marinus (strain MIT 9215).